A 185-amino-acid polypeptide reads, in one-letter code: Chromobox protein homolog 1 (185 aa).

Glycyl lysine isopeptide (Lys-Gly) (interchain with G-Cter in SUMO2) cross-links involve residues lysine 9 and lysine 33. The region spanning 21–79 (YVVEKVLDRRVVKGKVEYLLKWKGFSDEDNTWEPEENLDCPDLIAEFLQSQKTAHETDK) is the Chromo 1 domain. Residues 63–124 (LIAEFLQSQK…RGLEPERIIG (62 aa)) form a disordered region. Over residues 73–89 (TAHETDKSEGGKRKADS) the composition is skewed to basic and acidic residues. Phosphoserine occurs at positions 89 and 91. Residues 96 to 121 (EESKPKKKKEESEKPRGFARGLEPER) show a composition bias toward basic and acidic residues. Residues lysine 99 and lysine 150 each participate in a glycyl lysine isopeptide (Lys-Gly) (interchain with G-Cter in SUMO2) cross-link. Residues 117–175 (LEPERIIGATDSSGELMFLMKWKNSDEADLVPAKEANVKCPQVVISFYEERLTWHSYPS) enclose the Chromo 2; shadow subtype domain. Serine 175 carries the post-translational modification Phosphoserine.

As to quaternary structure, homodimer. Interacts directly with CHAF1A, EMSY, LBR, TIF1/TIF1A and TRIM28/TIF1B PXVXL motif via the chromoshadow domain. Interacts directly with histone H3 methylated at 'Lys-9' via the chromo domain. Interacts with SUV39H1 and SETDB1, KMT5B and KMT5C. Interacts with PRDM6. Interacts with POGZ. Interacts with CHAMP1. Interacts with INCENP. Interacts with SGO1; the CBX1 homodimer binds to one molecule of SGO1. Interacts with LRIF1 (via PxVxL motif). Interacts with HDGFL2. Interacts with CHD3. Interacts with CHD4. In terms of processing, not phosphorylated. Post-translationally, ubiquitinated. Expressed in all adult and embryonic tissues.

The protein resides in the nucleus. Component of heterochromatin. Recognizes and binds histone H3 tails methylated at 'Lys-9', leading to epigenetic repression. Interaction with lamin B receptor (LBR) can contribute to the association of the heterochromatin with the inner nuclear membrane. The chain is Chromobox protein homolog 1 (CBX1) from Homo sapiens (Human).